The chain runs to 211 residues: Thiamine-phosphate synthase (211 aa).

4-amino-2-methyl-5-(diphosphooxymethyl)pyrimidine contacts are provided by residues 43 to 47 (QLRDK) and N75. Mg(2+) contacts are provided by D76 and D95. S114 is a binding site for 4-amino-2-methyl-5-(diphosphooxymethyl)pyrimidine. 140–142 (TAS) lines the 2-[(2R,5Z)-2-carboxy-4-methylthiazol-5(2H)-ylidene]ethyl phosphate pocket. K143 lines the 4-amino-2-methyl-5-(diphosphooxymethyl)pyrimidine pocket. 2-[(2R,5Z)-2-carboxy-4-methylthiazol-5(2H)-ylidene]ethyl phosphate contacts are provided by residues G170 and 190-191 (IS).

The protein belongs to the thiamine-phosphate synthase family. Mg(2+) serves as cofactor.

The enzyme catalyses 2-[(2R,5Z)-2-carboxy-4-methylthiazol-5(2H)-ylidene]ethyl phosphate + 4-amino-2-methyl-5-(diphosphooxymethyl)pyrimidine + 2 H(+) = thiamine phosphate + CO2 + diphosphate. The catalysed reaction is 2-(2-carboxy-4-methylthiazol-5-yl)ethyl phosphate + 4-amino-2-methyl-5-(diphosphooxymethyl)pyrimidine + 2 H(+) = thiamine phosphate + CO2 + diphosphate. It catalyses the reaction 4-methyl-5-(2-phosphooxyethyl)-thiazole + 4-amino-2-methyl-5-(diphosphooxymethyl)pyrimidine + H(+) = thiamine phosphate + diphosphate. The protein operates within cofactor biosynthesis; thiamine diphosphate biosynthesis; thiamine phosphate from 4-amino-2-methyl-5-diphosphomethylpyrimidine and 4-methyl-5-(2-phosphoethyl)-thiazole: step 1/1. Functionally, condenses 4-methyl-5-(beta-hydroxyethyl)thiazole monophosphate (THZ-P) and 2-methyl-4-amino-5-hydroxymethyl pyrimidine pyrophosphate (HMP-PP) to form thiamine monophosphate (TMP). The polypeptide is Thiamine-phosphate synthase (Coprothermobacter proteolyticus (strain ATCC 35245 / DSM 5265 / OCM 4 / BT)).